Consider the following 63-residue polypeptide: Protein BP4A (63 aa).

In terms of tissue distribution, pollen specific.

The chain is Protein BP4A (BP4A) from Brassica napus (Rape).